Consider the following 367-residue polypeptide: MSDSQTLVVKLGTSVLTGGSRRLNRAHIVELVRQCAQLHAAGHRIVIVTSGAIAAGREHLGYPELPATIASKQLLAAVGQSRLIQLWEQLFSIYGIHIGQMLLTRADMEDRERFLNARDTLRALLDNHIVPVINENDAVATAEIKVGDNDNLSALAAILAGADKLLLLTDQQGLFTADPRSNPQAELIKDVYGVDDALRSVAGDSVSGLGTGGMSTKLQAADVACRAGIDTIIASGSKPGVIGDVMEGISVGTRFHAQASPLENRKRWIFGAPPAGEITVDEGATAAMLERGSSLLPKGIKSVTGNFSRGEVIRICNLQGRDIAHGVSRYNSDALRRIAGHHSQQIDAILGYEYGPVAVHRDDMITR.

Residue Lys10 coordinates ATP. Positions 50, 137, and 149 each coordinate substrate. ATP is bound by residues 169-170 (TD) and 211-217 (TGGMSTK). The 79-residue stretch at 275–353 (AGEITVDEGA…QQIDAILGYE (79 aa)) folds into the PUA domain.

This sequence belongs to the glutamate 5-kinase family.

The protein localises to the cytoplasm. It catalyses the reaction L-glutamate + ATP = L-glutamyl 5-phosphate + ADP. It functions in the pathway amino-acid biosynthesis; L-proline biosynthesis; L-glutamate 5-semialdehyde from L-glutamate: step 1/2. Functionally, catalyzes the transfer of a phosphate group to glutamate to form L-glutamate 5-phosphate. The protein is Glutamate 5-kinase of Salmonella paratyphi A (strain ATCC 9150 / SARB42).